The chain runs to 357 residues: 3-isopropylmalate dehydrogenase (357 aa).

An NAD(+)-binding site is contributed by 76-89; sequence GPKWDDLPSEKRPE. The substrate site is built by Arg-96, Arg-106, Arg-135, and Asp-224. Mg(2+) is bound by residues Asp-224, Asp-248, and Asp-252. Position 282–294 (282–294) interacts with NAD(+); that stretch reads GSAPDIAGQDKAN.

The protein belongs to the isocitrate and isopropylmalate dehydrogenases family. LeuB type 1 subfamily. As to quaternary structure, homodimer. It depends on Mg(2+) as a cofactor. Mn(2+) is required as a cofactor.

The protein resides in the cytoplasm. The catalysed reaction is (2R,3S)-3-isopropylmalate + NAD(+) = 4-methyl-2-oxopentanoate + CO2 + NADH. It participates in amino-acid biosynthesis; L-leucine biosynthesis; L-leucine from 3-methyl-2-oxobutanoate: step 3/4. Functionally, catalyzes the oxidation of 3-carboxy-2-hydroxy-4-methylpentanoate (3-isopropylmalate) to 3-carboxy-4-methyl-2-oxopentanoate. The product decarboxylates to 4-methyl-2 oxopentanoate. The polypeptide is 3-isopropylmalate dehydrogenase (Nitratidesulfovibrio vulgaris (strain ATCC 29579 / DSM 644 / CCUG 34227 / NCIMB 8303 / VKM B-1760 / Hildenborough) (Desulfovibrio vulgaris)).